We begin with the raw amino-acid sequence, 512 residues long: Histidine ammonia-lyase (512 aa).

Positions 143-145 form a cross-link, 5-imidazolinone (Ala-Gly); it reads ASG. 2,3-didehydroalanine (Ser) is present on serine 144.

This sequence belongs to the PAL/histidase family. Contains an active site 4-methylidene-imidazol-5-one (MIO), which is formed autocatalytically by cyclization and dehydration of residues Ala-Ser-Gly.

Its subcellular location is the cytoplasm. The catalysed reaction is L-histidine = trans-urocanate + NH4(+). It functions in the pathway amino-acid degradation; L-histidine degradation into L-glutamate; N-formimidoyl-L-glutamate from L-histidine: step 1/3. This Ruegeria pomeroyi (strain ATCC 700808 / DSM 15171 / DSS-3) (Silicibacter pomeroyi) protein is Histidine ammonia-lyase.